The primary structure comprises 177 residues: Large ribosomal subunit protein uL6 (177 aa).

The protein belongs to the universal ribosomal protein uL6 family. In terms of assembly, part of the 50S ribosomal subunit.

Functionally, this protein binds to the 23S rRNA, and is important in its secondary structure. It is located near the subunit interface in the base of the L7/L12 stalk, and near the tRNA binding site of the peptidyltransferase center. This is Large ribosomal subunit protein uL6 from Magnetococcus marinus (strain ATCC BAA-1437 / JCM 17883 / MC-1).